Here is a 483-residue protein sequence, read N- to C-terminus: Regulatory protein ViaA (483 aa).

The protein belongs to the ViaA family. In terms of assembly, homodimer. Interacts with RavA.

Its subcellular location is the cytoplasm. In terms of biological role, component of the RavA-ViaA chaperone complex, which may act on the membrane to optimize the function of some of the respiratory chains. ViaA stimulates the ATPase activity of RavA. The chain is Regulatory protein ViaA from Escherichia coli O6:K15:H31 (strain 536 / UPEC).